The sequence spans 436 residues: Probable G-protein coupled receptor C06G4.5 (436 aa).

Residues 1–53 (MSTNLVDYVDDSYLNQSMNSENGLDSVTQIMYDMKKYNIVNDVLPPPNHEDLH) lie on the Extracellular side of the membrane. Asparagine 15 carries N-linked (GlcNAc...) asparagine glycosylation. Residues 54-74 (VVIMAVSYLLLFLLGTCGNVA) traverse the membrane as a helical segment. Topologically, residues 75 to 94 (VLTTIYHVIRSSRATLDNTL) are cytoplasmic. The chain crosses the membrane as a helical span at residues 95-115 (IYVIVLSCVDFGVCLSLPITV). Over 116–132 (IDQILGFWMFGKIPCKL) the chain is Extracellular. Residues 133 to 153 (HAVFENFGKILSALILTAMSF) traverse the membrane as a helical segment. Residues 154 to 171 (DRYAGVCHPQRKRLRSRN) are Cytoplasmic-facing. The helical transmembrane segment at 172–192 (FAITILLVLAVYAFITLCPLL) threads the bilayer. Residues 193 to 230 (WSFTAREIILYAKETAPGMLTRMKIEKCTVDIDSQMFT) are Extracellular-facing. A helical membrane pass occupies residues 231 to 251 (AFTIYQFILCYCTPLVLIAFF). The Cytoplasmic segment spans residues 252-281 (YTKLLSKLREHTRTFKSSQIPFLHISLYTL). The chain crosses the membrane as a helical span at residues 282 to 302 (AVACFYFLCWTPFWMATLFAV). Residues 303–316 (YLENSANSSSVPPV) lie on the Extracellular side of the membrane. An N-linked (GlcNAc...) asparagine glycan is attached at asparagine 309. The helical transmembrane segment at 317 to 337 (FVYIMYFIHALPFTNSAINWI) threads the bilayer. Topologically, residues 338 to 436 (LYGALNGQLQ…LLSNHNPTFL (99 aa)) are cytoplasmic.

Belongs to the G-protein coupled receptor 1 family.

It is found in the cell membrane. Its function is as follows. Putative receptor. In Caenorhabditis elegans, this protein is Probable G-protein coupled receptor C06G4.5.